The primary structure comprises 67 residues: DNA gyrase inhibitor YacG (67 aa).

Residues Cys-8, Cys-11, Cys-27, and Cys-31 each contribute to the Zn(2+) site.

It belongs to the DNA gyrase inhibitor YacG family. In terms of assembly, interacts with GyrB. It depends on Zn(2+) as a cofactor.

Its function is as follows. Inhibits all the catalytic activities of DNA gyrase by preventing its interaction with DNA. Acts by binding directly to the C-terminal domain of GyrB, which probably disrupts DNA binding by the gyrase. The chain is DNA gyrase inhibitor YacG from Ralstonia pickettii (strain 12J).